We begin with the raw amino-acid sequence, 591 residues long: CTP synthase 1-A (591 aa).

In terms of domain architecture, Glutamine amidotransferase type-1 spans 300–554 (SIALVGKYTK…LASVGRLSQY (255 aa)). Residues C399, H526, and E528 each act as for GATase activity in the active site.

This sequence belongs to the CTP synthase family.

It carries out the reaction UTP + L-glutamine + ATP + H2O = CTP + L-glutamate + ADP + phosphate + 2 H(+). It functions in the pathway pyrimidine metabolism; CTP biosynthesis via de novo pathway; CTP from UDP: step 2/2. Functionally, this enzyme is involved in the de novo synthesis of CTP, a precursor of DNA, RNA and phospholipids. Catalyzes the ATP-dependent amination of UTP to CTP with either L-glutamine or ammonia as a source of nitrogen. The protein is CTP synthase 1-A (ctps1-a) of Xenopus laevis (African clawed frog).